A 607-amino-acid polypeptide reads, in one-letter code: UPF0329 protein ECU06_1610 (607 aa).

Disordered stretches follow at residues 312–410 and 531–570; these read VHEV…RSKG and TSSE…PPGV. A compositionally biased stretch (basic and acidic residues) spans 313-347; that stretch reads HEVKERESEEKRREEESLRNAEELLRMEEREKGEG. Positions 353–364 are enriched in basic residues; it reads KGKKKRGKKGAG. Over residues 365-374 the composition is skewed to basic and acidic residues; the sequence is KAKEESKEED. The span at 375–393 shows a compositional bias: acidic residues; it reads RGEEEEESVEAEVPVEEMA. Residues 531-543 are compositionally biased toward polar residues; that stretch reads TSSEKTGKGSSPS. A compositionally biased stretch (acidic residues) spans 549-558; sequence DVDEIEEDGS.

This sequence belongs to the UPF0329 family.

The sequence is that of UPF0329 protein ECU06_1610 from Encephalitozoon cuniculi (strain GB-M1) (Microsporidian parasite).